The primary structure comprises 769 residues: Multiple C2 domain and transmembrane region protein 5 (769 aa).

C2 domains follow at residues serine 23–tyrosine 143, proline 184–phenylalanine 305, and tyrosine 345–tyrosine 467. The Ca(2+) site is built by aspartate 56, aspartate 62, aspartate 109, aspartate 111, and aspartate 116. 2 helical membrane passes run isoleucine 604–isoleucine 624 and leucine 712–valine 732.

This sequence belongs to the MCTP family. Requires Ca(2+) as cofactor. In terms of tissue distribution, highly expressed in roots meristems and shoot apical meristems (SAMs). Observed in flowers.

It localises to the endoplasmic reticulum membrane. May function as a signaling molecule by regulating the trafficking of other regulators. This Arabidopsis thaliana (Mouse-ear cress) protein is Multiple C2 domain and transmembrane region protein 5.